We begin with the raw amino-acid sequence, 183 residues long: tRNA-splicing endonuclease (183 aa).

Active-site residues include Y120, H128, and K159.

This sequence belongs to the tRNA-intron endonuclease family. Archaeal short subfamily. Homotetramer; although the tetramer contains four active sites, only two participate in the cleavage. Therefore, it should be considered as a dimer of dimers.

It carries out the reaction pretRNA = a 3'-half-tRNA molecule with a 5'-OH end + a 5'-half-tRNA molecule with a 2',3'-cyclic phosphate end + an intron with a 2',3'-cyclic phosphate and a 5'-hydroxyl terminus.. Functionally, endonuclease that removes tRNA introns. Cleaves pre-tRNA at the 5'- and 3'-splice sites to release the intron. The products are an intron and two tRNA half-molecules bearing 2',3' cyclic phosphate and 5'-OH termini. Recognizes a pseudosymmetric substrate in which 2 bulged loops of 3 bases are separated by a stem of 4 bp. The chain is tRNA-splicing endonuclease from Pyrobaculum aerophilum (strain ATCC 51768 / DSM 7523 / JCM 9630 / CIP 104966 / NBRC 100827 / IM2).